An 89-amino-acid polypeptide reads, in one-letter code: MALTNADRAEIIAKFARAENDTGSPEVQVALLTAQINDLQGHFKAHKHDHHSRRGLIRMVNQRRKLLDYLNGKDHERYTALIGALGLRR.

The protein belongs to the universal ribosomal protein uS15 family. Part of the 30S ribosomal subunit. Forms a bridge to the 50S subunit in the 70S ribosome, contacting the 23S rRNA.

Its function is as follows. One of the primary rRNA binding proteins, it binds directly to 16S rRNA where it helps nucleate assembly of the platform of the 30S subunit by binding and bridging several RNA helices of the 16S rRNA. Forms an intersubunit bridge (bridge B4) with the 23S rRNA of the 50S subunit in the ribosome. The protein is Small ribosomal subunit protein uS15 of Acinetobacter baumannii (strain AB307-0294).